A 319-amino-acid polypeptide reads, in one-letter code: tRNA (guanine-N(7)-)-methyltransferase (319 aa).

Residues 1–44 are disordered; it reads MSESPETPEPSPAQSPEAAPEQPQAARPVTPGSQASFGTYGGRP. Residues 14–26 are compositionally biased toward low complexity; it reads QSPEAAPEQPQAA. Residues Glu103, Glu128, Asn155, and Asp178 each coordinate S-adenosyl-L-methionine. Residue Asp178 is part of the active site. Positions 182 and 214 each coordinate substrate. Positions 262-288 are disordered; it reads APVKEGRAPVSTEHTGPNEGVDETGGW. 298-301 provides a ligand contact to substrate; sequence TSFE.

The protein belongs to the class I-like SAM-binding methyltransferase superfamily. TrmB family.

The catalysed reaction is guanosine(46) in tRNA + S-adenosyl-L-methionine = N(7)-methylguanosine(46) in tRNA + S-adenosyl-L-homocysteine. The protein operates within tRNA modification; N(7)-methylguanine-tRNA biosynthesis. Catalyzes the formation of N(7)-methylguanine at position 46 (m7G46) in tRNA. The protein is tRNA (guanine-N(7)-)-methyltransferase of Arthrobacter sp. (strain FB24).